The primary structure comprises 348 residues: MTDERGNFYYNTPPPPLRYPSNPATAIFTNAQTYNNAPGYVPPATRDNKMDTSRSNSTNSVAIAPYNKSKEPTLDAGESIWYNKCVDFVQKIIRYYRCNDMSELSPLMIHFINTIRDMCIDTNPINVNVVKRFESEETMIRHLIRLQKELGQGNAAESLPSDSNIFQASFVLNSLPAYAQKFYNGGADMLGKDALAEAAKQLSLAVQYMVAESVTCNIPIPLPFNQQLANNYMTLLLKHATLPPNIQSAVESRRFPHINMINDLINAVIDDLFAGGGDYYYYVLNEKNRARIMSLKENVAFLAPLSASANIFNYMAELATRAGKQPSMFQNATFLTSAPTRSIRLPLI.

The protein belongs to the baculoviridae gp41 family. Post-translationally, O-glycosylated; contains N-acetylglucosamine side chains.

The sequence is that of Structural glycoprotein p40 (P40) from Bombyx mori nuclear polyhedrosis virus (BmNPV).